A 432-amino-acid polypeptide reads, in one-letter code: CinA-like protein (432 aa).

This sequence belongs to the CinA family.

This Colwellia psychrerythraea (strain 34H / ATCC BAA-681) (Vibrio psychroerythus) protein is CinA-like protein.